The sequence spans 169 residues: Disulfide bond formation protein B (169 aa).

Over 1-14 the chain is Cytoplasmic; the sequence is MSNDTFYLKREKRF. The chain crosses the membrane as a helical span at residues 15–31; the sequence is LVLLGIICLSLIGGALY. Residues 32 to 49 lie on the Periplasmic side of the membrane; the sequence is MQIALGEAPCPLCILQRY. An intrachain disulfide couples Cys-41 to Cys-44. A helical transmembrane segment spans residues 50–64; it reads ALLFIAIFAFIGAAM. Residues 65–71 are Cytoplasmic-facing; the sequence is NGRRGVT. A helical membrane pass occupies residues 72-89; it reads VFEALVTLSALCGIAAAG. Topologically, residues 90 to 144 are periplasmic; the sequence is RHAWILAHPSDSCGIDILQPIVDGLPLATLFPTGFQVSGFCTTPYPPVLGLSLAQ. An intrachain disulfide couples Cys-102 to Cys-130. Residues 145 to 163 form a helical membrane-spanning segment; it reads WALTAFVLTAILVPACIIR. Residues 164–169 lie on the Cytoplasmic side of the membrane; that stretch reads NRRKPY.

The protein belongs to the DsbB family.

It is found in the cell inner membrane. In terms of biological role, required for disulfide bond formation in some periplasmic proteins. Acts by oxidizing the DsbA protein. The protein is Disulfide bond formation protein B of Pseudomonas syringae pv. tomato (strain ATCC BAA-871 / DC3000).